The following is a 444-amino-acid chain: Ribosomal protein uS12 methylthiotransferase RimO (444 aa).

The 117-residue stretch at Ile3–Glu119 folds into the MTTase N-terminal domain. The [4Fe-4S] cluster site is built by Cys12, Cys48, Cys82, Cys156, Cys160, and Cys163. The 231-residue stretch at Ala142–Gln372 folds into the Radical SAM core domain. The TRAM domain occupies Leu375–Leu444.

Belongs to the methylthiotransferase family. RimO subfamily. Requires [4Fe-4S] cluster as cofactor.

Its subcellular location is the cytoplasm. It catalyses the reaction L-aspartate(89)-[ribosomal protein uS12]-hydrogen + (sulfur carrier)-SH + AH2 + 2 S-adenosyl-L-methionine = 3-methylsulfanyl-L-aspartate(89)-[ribosomal protein uS12]-hydrogen + (sulfur carrier)-H + 5'-deoxyadenosine + L-methionine + A + S-adenosyl-L-homocysteine + 2 H(+). Catalyzes the methylthiolation of an aspartic acid residue of ribosomal protein uS12. The sequence is that of Ribosomal protein uS12 methylthiotransferase RimO from Pelotomaculum thermopropionicum (strain DSM 13744 / JCM 10971 / SI).